The primary structure comprises 1663 residues: MKDAAEELSFARVLLQRVDELEKLFKDREQFLELVSRKLSLVPGAEEVTMVTWEELEQAITDGWRASQAGSETLMGFSKHGGFTSLTSPEGTLSGDSTKQPSIEQALDSASGLGPDRTASGSGGTAHPSDGVSSREQSKVPSGTGRQQQPRARDEAGVPRLHQSSTFQFKSDSDRHRSREKLTSTQPRRNARPGPVQQDLPLARDQPSSVPASQSQVHLRPDRRGLEPTGMNQPGLVPASTYPHGVVPLSMGQLGVPPPEMDDRELIPFVVDEQRMLPPSVPGRDQQGLELPSTDQHGLVSVSAYQHGMTFPGTDQRSMEPLGMDQRGCVISGMGQQGLVPPGIDQQGLTLPVVDQHGLVLPFTDQHGLVSPGLMPISADQQGFVQPSLEATGFIQPGTEQHDLIQSGRFQRALVQRGAYQPGLVQPGADQRGLVRPGMDQSGLAQPGADQRGLVWPGMDQSGLAQPGRDQHGLIQPGTGQHDLVQSGTGQGVLVQPGVDQPGMVQPGRFQRALVQPGAYQPGLVQPGADQIDVVQPGADQHGLVQSGADQSDLAQPGAVQHGLVQPGVDQRGLAQPRADHQRGLVPPGADQRGLVQPGADQHGLVQPGVDQHGLAQPGEVQRSLVQPGIVQRGLVQPGAVQRGLVQPGAVQRGLVQPGVDQRGLVQPGAVQRGLVQPGAVQHGLVQPGADQRGLVQPGVDQRGLVQPGVDQRGLVQPGMDQRGLIQPGADQPGLVQPGAGQLGMVQPGIGQQGMVQPQADPHGLVQPGAYPLGLVQPGAYLHDLSQSGTYPRGLVQPGMDQYGLRQPGAYQPGLIAPGTKLRGSSTFQADSTGFISVRPYQHGMVPPGREQYGQVSPLLASQGLASPGIDRRSLVPPETYQQGLMHPGTDQHSPIPLSTGLGSTHPDQQHVASPGPGEHDQVYPDAAQHGHAFSLFDSHDSMYPGYRGPGYLSADQHGQEGLDPNRTRASDRHGIPAQKAPGQDVTLFRSPDSVDRVLSEGSEVSSEVLSERRNSLRRMSSSFPTAVETFHLMGELSSLYVGLKESMKDLDEEQAGQTDLEKIQFLLAQMVKRTIPPELQEQLKTVKTLAKEVWQEKAKVERLQRILEGEGNQEAGKELKAGELRLQLGVLRVTVADIEKELAELRESQDRGKAAMENSVSEASLYLQDQLDKLRMIIESMLTSSSTLLSMSMAPHKAHTLAPGQIDPEATCPACSLDVSHQVSTLVRRYEQLQDMVNSLAVSRPSKKAKLQRQDEELLGRVQSAILQVQGDCEKLNITTSNLIEDHRQKQKDIAMLYQGLEKLEKEKANREHLEMEIDVKADKSALATKVSRVQFDATTEQLNHMMQELVAKMSGQEQDWQKMLDRLLTEMDNKLDRLELDPVKQLLEDRWKSLRQQLRERPPLYQADEAAAMRRQLLAHFHCLSCDRPLETPVTGHAIPVTPAGPGLPGHHSIRPYTVFELEQVRQHSRNLKLGSAFPRGDLAQMEQSVGRLRSMHSKMLMNIEKVQIHFGGSTKASSQIIRELLHAQCLGSPCYKRVTDMADYTYSTVPRRCGGSHTLTYPYHRSRPQHLPRGLYPTEEIQIAMKHDEVDILGLDGHIYKGRMDTRLPGILRKDSSGTSKRKSQQPRPHVHRPPSLSSNGQLPSRPQSAQISAGNTSER.

Disordered regions lie at residues 80–239 (HGGF…LVPA), 423–481 (GLVQ…GTGQ), 575–615 (AQPR…QHGL), 880–925 (TYQQ…QVYP), and 948–984 (RGPGYLSADQHGQEGLDPNRTRASDRHGIPAQKAPGQ). Composition is skewed to polar residues over residues 84–103 (TSLTSPEGTLSGDSTKQPSI) and 131–150 (GVSSREQSKVPSGTGRQQQP). Over residues 171–182 (SDSDRHRSREKL) the composition is skewed to basic and acidic residues. Residues 206–217 (QPSSVPASQSQV) show a composition bias toward low complexity. A compositionally biased stretch (basic and acidic residues) spans 958 to 975 (HGQEGLDPNRTRASDRHG). Coiled coils occupy residues 1085 to 1160 (KTVK…MENS) and 1286 to 1325 (EDHRQKQKDIAMLYQGLEKLEKEKANREHLEMEIDVKADK). The span at 1609 to 1619 (TRLPGILRKDS) shows a compositional bias: basic and acidic residues. A disordered region spans residues 1609–1663 (TRLPGILRKDSSGTSKRKSQQPRPHVHRPPSLSSNGQLPSRPQSAQISAGNTSER). Residues 1623 to 1636 (SKRKSQQPRPHVHR) are compositionally biased toward basic residues. Over residues 1639–1663 (SLSSNGQLPSRPQSAQISAGNTSER) the composition is skewed to polar residues.

In terms of assembly, interacts with AKAP3, ODF2 and TSSK4. Interacts with AKAP4. Expressed in the sperm.

It is found in the nucleus membrane. The protein localises to the nucleus. The protein resides in the cytoplasm. It localises to the cell projection. Its subcellular location is the cilium. It is found in the flagellum. Has an essential role in the formation of sperm flagella and flagellar structure maintainance. It acts as a suppressor of ubiquitination and degradation of proteins involved in flagellar development and motility. The sequence is that of Glutamine-rich protein 2 (QRICH2) from Homo sapiens (Human).